A 303-amino-acid polypeptide reads, in one-letter code: Oxygen-dependent coproporphyrinogen-III oxidase (303 aa).

Residue Ser93 participates in substrate binding. Positions 97 and 107 each coordinate a divalent metal cation. His107 functions as the Proton donor in the catalytic mechanism. Substrate is bound at residue 109-111 (NVR). 2 residues coordinate a divalent metal cation: His146 and His176. Positions 241–276 (YVEFNLVYDRGTLFGLQSGGRTESILMSLPPQVRWG) are important for dimerization. 259–261 (GGR) lines the substrate pocket.

It belongs to the aerobic coproporphyrinogen-III oxidase family. As to quaternary structure, homodimer. A divalent metal cation is required as a cofactor.

It is found in the cytoplasm. It carries out the reaction coproporphyrinogen III + O2 + 2 H(+) = protoporphyrinogen IX + 2 CO2 + 2 H2O. Its pathway is porphyrin-containing compound metabolism; protoporphyrin-IX biosynthesis; protoporphyrinogen-IX from coproporphyrinogen-III (O2 route): step 1/1. Its function is as follows. Involved in the heme biosynthesis. Catalyzes the aerobic oxidative decarboxylation of propionate groups of rings A and B of coproporphyrinogen-III to yield the vinyl groups in protoporphyrinogen-IX. This chain is Oxygen-dependent coproporphyrinogen-III oxidase, found in Pseudomonas putida (strain ATCC 47054 / DSM 6125 / CFBP 8728 / NCIMB 11950 / KT2440).